Consider the following 95-residue polypeptide: Small ribosomal subunit protein bS21 (95 aa).

The interval 55–95 (RKLARKKMQREGLLPMKPKPVFGAGPGAGRGGPGAGARPPR) is disordered. Residues 78–89 (AGPGAGRGGPGA) are compositionally biased toward gly residues.

The protein belongs to the bacterial ribosomal protein bS21 family.

In Nitrobacter hamburgensis (strain DSM 10229 / NCIMB 13809 / X14), this protein is Small ribosomal subunit protein bS21.